A 387-amino-acid polypeptide reads, in one-letter code: Zinc finger transcription factor YY1 (387 aa).

5 C2H2-type zinc fingers span residues 79 to 103, 108 to 132, 138 to 162, 168 to 193, and 230 to 255; these read FLCSYDGCGKTFFDVSALRKHSHIH, YVCDQEGCGKKFLDSSKLKRHYLIH, YICTYEGCGKAFSLDFNLRSHMKTH, HICPYSGCVKRYAHEYKLKNHVAAYH, and YACPYEGCEKAYIHEYKLKLHLKREH. Residues 201–290 form an MED18-binding region; that stretch reads TPKYTPPAEK…DDGSDQDVYR (90 aa). Residues 258–387 are disordered; it reads HLQEENADTP…DDDEETEYED (130 aa). Ser284 is modified (phosphoserine). Basic residues predominate over residues 291 to 305; that stretch reads KHASNGKGQTHKQQS. The short motif at 319–326 is the Nuclear localization signal element; sequence GKKGSTSS. A coiled-coil region spans residues 339 to 367; the sequence is AKETFEEVEREEEEDSEETEEDRDNVEDG. Acidic residues-rich tracts occupy residues 344–363 and 373–387; these read EEVEREEEEDSEETEEDRDN and NNEDDDDDEETEYED.

Interacts with MED18 to suppress disease susceptibility via the repression of genes glutaredoxins GRX480, GRXS13 and thioredoxin TRX-h5. As to expression, mostly expressed in flowers, to a lower extent in seedlings, stems and leaves, and, at low levels, in roots and senescent leaves.

It is found in the nucleus. Dual-function transcription factor with both repression and activation activities. Binds to 5'-CCATATT-3' motif in target gene promoters (e.g. ABR1). Also binds to G-rich DNA motif 5'-GGGGGCAGTGG-3'. Regulates the expression of genes involved in diverse cellular pathways, including glucose metabolism, photosynthesis, phototropism and stress response (e.g. salt, drought and osmotic stress). Regulates plant immunity, especially during necrotrophic fungal infection (e.g. B.cinerea). Binds to ABR1 promoter and promotes its expression, thus negatively regulating the abscisic acid (ABA) signaling pathway. Represses ABA- and salt-responsive genes expression. The protein is Zinc finger transcription factor YY1 of Arabidopsis thaliana (Mouse-ear cress).